The chain runs to 605 residues: Insulin-like growth factor-binding protein complex acid labile subunit (605 aa).

The first 27 residues, 1-27 (MALRKGGLALALLLLSWVALGPRSLEG), serve as a signal peptide directing secretion. Positions 32 to 74 (TPGEAEGPACPATCACSYDDEVNELSVFCSSRNLTRLPDGIPG) constitute an LRRNT domain. Intrachain disulfides connect C41–C47 and C45–C60. N64, N85, and N96 each carry an N-linked (GlcNAc...) asparagine glycan. 19 LRR repeats span residues 75–96 (GTQA…AFRN), 99–120 (SLAF…ALLG), 123–144 (NLCH…TFAY), 147–168 (ALAL…LFEG), 171–192 (NLWD…AFRG), 195–216 (GLRE…LFSG), 219–240 (ELRE…VFAQ), 243–264 (RLQK…AFLG), 267–288 (ALRW…TFPG), 291–312 (GLRV…TFED), 315–336 (FLEE…SFEG), 339–360 (QLEV…AFLG), 363–384 (NVAV…VFRG), 387–408 (KLHS…TFAG), 411–432 (GLRR…SLWG), 435–456 (ELLE…LFQG), 459–480 (KLEY…ALGP), 483–504 (RAFW…LLAS), and 507–528 (RLRY…PPGL). A glycan (N-linked (GlcNAc...) asparagine) is linked at N368. N-linked (GlcNAc...) asparagine glycosylation is present at N515. The LRRCT domain occupies 536–605 (NPWDCSCPLK…DLGEAHFAPC (70 aa)). 3 cysteine pairs are disulfide-bonded: C540–C583, C542–C605, and C566–C571. N-linked (GlcNAc...) asparagine glycosylation occurs at N580.

As to quaternary structure, forms a ternary complex with IGF1 and IGFBP3.

Its subcellular location is the secreted. It is found in the extracellular space. Functionally, involved in protein-protein interactions that result in protein complexes, receptor-ligand binding or cell adhesion. The chain is Insulin-like growth factor-binding protein complex acid labile subunit (IGFALS) from Papio hamadryas (Hamadryas baboon).